A 416-amino-acid chain; its full sequence is Gamma-glutamyl phosphate reductase (416 aa).

Belongs to the gamma-glutamyl phosphate reductase family.

The protein localises to the cytoplasm. The enzyme catalyses L-glutamate 5-semialdehyde + phosphate + NADP(+) = L-glutamyl 5-phosphate + NADPH + H(+). It functions in the pathway amino-acid biosynthesis; L-proline biosynthesis; L-glutamate 5-semialdehyde from L-glutamate: step 2/2. Catalyzes the NADPH-dependent reduction of L-glutamate 5-phosphate into L-glutamate 5-semialdehyde and phosphate. The product spontaneously undergoes cyclization to form 1-pyrroline-5-carboxylate. The protein is Gamma-glutamyl phosphate reductase of Streptococcus pyogenes serotype M1.